Here is a 94-residue protein sequence, read N- to C-terminus: Small ribosomal subunit protein bS18c (94 aa).

Belongs to the bacterial ribosomal protein bS18 family. Part of the 30S ribosomal subunit.

Its subcellular location is the plastid. It localises to the chloroplast. This Manihot esculenta (Cassava) protein is Small ribosomal subunit protein bS18c.